We begin with the raw amino-acid sequence, 319 residues long: Cytochrome c biogenesis protein CcsA (319 aa).

7 helical membrane-spanning segments follow: residues 9–29 (ILTHISFSTISIVITIHLITL), 44–64 (GMIVTFFSITGFLVSRWASSG), 68–88 (LSNLYESLIFLSWALYILHTI), 143–163 (MLLSYATLLCGSLLSAAILII), 223–243 (VISLGFTLLTIGILCGAVWAN), 257–271 (TWAFITWTIFAIYLH), and 286–306 (VASIGFLIIWICYFGINLLGI).

It belongs to the CcmF/CycK/Ccl1/NrfE/CcsA family. As to quaternary structure, may interact with Ccs1.

It is found in the plastid. It localises to the chloroplast thylakoid membrane. Required during biogenesis of c-type cytochromes (cytochrome c6 and cytochrome f) at the step of heme attachment. This chain is Cytochrome c biogenesis protein CcsA, found in Agrostis stolonifera (Creeping bentgrass).